We begin with the raw amino-acid sequence, 223 residues long: Triosephosphate isomerase (223 aa).

10–12 (NFK) contacts substrate. Histidine 94 serves as the catalytic Electrophile. Glutamate 142 functions as the Proton acceptor in the catalytic mechanism. Residues isoleucine 147, glycine 182, and 203 to 204 (AS) contribute to the substrate site.

The protein belongs to the triosephosphate isomerase family. In terms of assembly, homotetramer; dimer of dimers.

Its subcellular location is the cytoplasm. It catalyses the reaction D-glyceraldehyde 3-phosphate = dihydroxyacetone phosphate. The protein operates within carbohydrate biosynthesis; gluconeogenesis. It functions in the pathway carbohydrate degradation; glycolysis; D-glyceraldehyde 3-phosphate from glycerone phosphate: step 1/1. Involved in the gluconeogenesis. Catalyzes stereospecifically the conversion of dihydroxyacetone phosphate (DHAP) to D-glyceraldehyde-3-phosphate (G3P). The protein is Triosephosphate isomerase of Archaeoglobus fulgidus (strain ATCC 49558 / DSM 4304 / JCM 9628 / NBRC 100126 / VC-16).